A 216-amino-acid chain; its full sequence is Ribosomal RNA small subunit methyltransferase G (216 aa).

S-adenosyl-L-methionine-binding positions include G81, F86, 130–131 (AE), and R144.

This sequence belongs to the methyltransferase superfamily. RNA methyltransferase RsmG family.

The protein localises to the cytoplasm. It carries out the reaction guanosine(527) in 16S rRNA + S-adenosyl-L-methionine = N(7)-methylguanosine(527) in 16S rRNA + S-adenosyl-L-homocysteine. In terms of biological role, specifically methylates the N7 position of guanine in position 527 of 16S rRNA. The protein is Ribosomal RNA small subunit methyltransferase G of Rhodospirillum centenum (strain ATCC 51521 / SW).